Here is a 95-residue protein sequence, read N- to C-terminus: MEHLYIVSYDIRNQRRWRRLFKTMHGFGCWLQLSVFQCRLDRIRIIKMEAAINEIVNHAEDHVLILDLGPAENVKPKVSSIGKTFDPILRQAVIV.

Asp-10 is a binding site for Mg(2+).

The protein belongs to the CRISPR-associated endoribonuclease Cas2 protein family. As to quaternary structure, homodimer, forms a heterotetramer with a Cas1 homodimer. Requires Mg(2+) as cofactor.

Its function is as follows. CRISPR (clustered regularly interspaced short palindromic repeat), is an adaptive immune system that provides protection against mobile genetic elements (viruses, transposable elements and conjugative plasmids). CRISPR clusters contain sequences complementary to antecedent mobile elements and target invading nucleic acids. CRISPR clusters are transcribed and processed into CRISPR RNA (crRNA). Functions as a ssRNA-specific endoribonuclease. Involved in the integration of spacer DNA into the CRISPR cassette. The protein is CRISPR-associated endoribonuclease Cas2 of Geobacter sulfurreducens (strain ATCC 51573 / DSM 12127 / PCA).